The primary structure comprises 29 residues: uncharacterized protein (29 aa).

Its subcellular location is the plastid. The protein localises to the chloroplast. This is an uncharacterized protein from Trieres chinensis (Marine centric diatom).